The chain runs to 1089 residues: Probable transport protein MmpL8 (1089 aa).

Residues 1 to 26 form a disordered region; sequence MCDVLMQPVRTPRPSTNLRSKPLRPT. The next 12 membrane-spanning stretches (helical) occupy residues 44-64, 222-242, 257-277, 316-336, 349-369, 400-420, 555-575, 874-894, 898-918, 930-950, 973-993, and 996-1016; these read WVVI…VPSL, ITIL…TMVL, LVAI…IFMS, IGKV…GMVF, LGIS…ALMV, KTHL…AGLA, AIST…LLGG, IIAM…RAIV, YLIG…VIVF, IPGL…MLLI, GGVI…LVFA, and GSVV…TFLV. The segment at 1056–1078 is disordered; the sequence is RTKRKPLLPKEEEEQSPPDDDDL. The segment covering 1066 to 1078 has biased composition (acidic residues); it reads EEEEQSPPDDDDL.

Belongs to the resistance-nodulation-cell division (RND) (TC 2.A.6) family. MmpL subfamily.

The protein localises to the cell membrane. The polypeptide is Probable transport protein MmpL8 (mmpL8) (Mycobacterium bovis (strain ATCC BAA-935 / AF2122/97)).